The chain runs to 563 residues: Protein NRT1/ PTR FAMILY 5.9 (563 aa).

Residues 56-76 form a helical membrane-spanning segment; the sequence is TWAGFTSMLPLFSAPLADTYW. At T81 the chain carries Phosphothreonine. A run of 10 helical transmembrane segments spans residues 82–102, 110–130, 168–188, 194–214, 317–337, 362–382, 394–414, 441–461, 479–499, and 528–548; these read ILAS…TAFA, TISS…LGVL, FFQL…TVMA, FGWV…ILVF, FPIW…ATFF, TITL…IPIT, VMER…IAAI, IFWL…TVVG, FALY…LISI, and WLLA…CKFF.

This sequence belongs to the major facilitator superfamily. Proton-dependent oligopeptide transporter (POT/PTR) (TC 2.A.17) family. In terms of tissue distribution, expressed in roots and flowers.

Its subcellular location is the membrane. In Arabidopsis thaliana (Mouse-ear cress), this protein is Protein NRT1/ PTR FAMILY 5.9 (NPF5.9).